Consider the following 322-residue polypeptide: Cytochrome c biogenesis protein CcsA (322 aa).

8 helical membrane-spanning segments follow: residues 19-39, 43-63, 72-92, 104-124, 150-170, 230-250, 264-281, and 291-311; these read NAIF…LIIV, LICN…FFYL, FFPL…LLFI, VIGA…SLSL, MMLS…YLVL, TIGI…VWAN, TWAL…HARL, and AFLG…VNFL.

The protein belongs to the CcmF/CycK/Ccl1/NrfE/CcsA family. May interact with Ccs1.

It is found in the plastid. The protein resides in the chloroplast thylakoid membrane. Functionally, required during biogenesis of c-type cytochromes (cytochrome c6 and cytochrome f) at the step of heme attachment. In Heterosigma akashiwo (strain NIES-293 / 8280G21-1), this protein is Cytochrome c biogenesis protein CcsA.